The primary structure comprises 201 residues: NAD(P)H dehydrogenase (quinone) (201 aa).

The 188-residue stretch at 4 to 191 folds into the Flavodoxin-like domain; sequence VLVLYYSMYG…KIAKCQGVHV (188 aa). Residues 10–15 and 79–81 contribute to the FMN site; these read SMYGHV and TRF. Tyr12 contacts NAD(+). Position 99 (Trp99) interacts with substrate. FMN contacts are provided by residues 114–120 and His135; that span reads STGTQHG.

Belongs to the WrbA family. Requires FMN as cofactor.

The catalysed reaction is a quinone + NADH + H(+) = a quinol + NAD(+). It carries out the reaction a quinone + NADPH + H(+) = a quinol + NADP(+). The polypeptide is NAD(P)H dehydrogenase (quinone) (Hydrogenovibrio crunogenus (strain DSM 25203 / XCL-2) (Thiomicrospira crunogena)).